We begin with the raw amino-acid sequence, 337 residues long: 4-hydroxy-3-methylbut-2-enyl diphosphate reductase (337 aa).

Residue cysteine 25 participates in [4Fe-4S] cluster binding. (2E)-4-hydroxy-3-methylbut-2-enyl diphosphate-binding residues include histidine 54 and histidine 87. Dimethylallyl diphosphate is bound by residues histidine 54 and histidine 87. Residues histidine 54 and histidine 87 each contribute to the isopentenyl diphosphate site. Cysteine 109 contributes to the [4Fe-4S] cluster binding site. Histidine 137 lines the (2E)-4-hydroxy-3-methylbut-2-enyl diphosphate pocket. Residue histidine 137 coordinates dimethylallyl diphosphate. Position 137 (histidine 137) interacts with isopentenyl diphosphate. The Proton donor role is filled by glutamate 139. Threonine 177 contributes to the (2E)-4-hydroxy-3-methylbut-2-enyl diphosphate binding site. Cysteine 207 provides a ligand contact to [4Fe-4S] cluster. (2E)-4-hydroxy-3-methylbut-2-enyl diphosphate is bound by residues serine 235, serine 236, asparagine 237, and serine 280. 4 residues coordinate dimethylallyl diphosphate: serine 235, serine 236, asparagine 237, and serine 280. The isopentenyl diphosphate site is built by serine 235, serine 236, asparagine 237, and serine 280.

Belongs to the IspH family. The cofactor is [4Fe-4S] cluster.

The enzyme catalyses isopentenyl diphosphate + 2 oxidized [2Fe-2S]-[ferredoxin] + H2O = (2E)-4-hydroxy-3-methylbut-2-enyl diphosphate + 2 reduced [2Fe-2S]-[ferredoxin] + 2 H(+). It catalyses the reaction dimethylallyl diphosphate + 2 oxidized [2Fe-2S]-[ferredoxin] + H2O = (2E)-4-hydroxy-3-methylbut-2-enyl diphosphate + 2 reduced [2Fe-2S]-[ferredoxin] + 2 H(+). It participates in isoprenoid biosynthesis; dimethylallyl diphosphate biosynthesis; dimethylallyl diphosphate from (2E)-4-hydroxy-3-methylbutenyl diphosphate: step 1/1. The protein operates within isoprenoid biosynthesis; isopentenyl diphosphate biosynthesis via DXP pathway; isopentenyl diphosphate from 1-deoxy-D-xylulose 5-phosphate: step 6/6. Catalyzes the conversion of 1-hydroxy-2-methyl-2-(E)-butenyl 4-diphosphate (HMBPP) into a mixture of isopentenyl diphosphate (IPP) and dimethylallyl diphosphate (DMAPP). Acts in the terminal step of the DOXP/MEP pathway for isoprenoid precursor biosynthesis. This chain is 4-hydroxy-3-methylbut-2-enyl diphosphate reductase, found in Leifsonia xyli subsp. xyli (strain CTCB07).